The sequence spans 198 residues: Probable GTP-binding protein EngB (198 aa).

One can recognise an EngB-type G domain in the interval 22–195 (DLPEIALAGR…WKAIHKFTKT (174 aa)). Residues 30-37 (GRSNVGKS), 57-61 (GKTQT), 75-78 (DVPG), 142-145 (TKAD), and 174-176 (FSS) contribute to the GTP site. Residues serine 37 and threonine 59 each contribute to the Mg(2+) site.

Belongs to the TRAFAC class TrmE-Era-EngA-EngB-Septin-like GTPase superfamily. EngB GTPase family. It depends on Mg(2+) as a cofactor.

Its function is as follows. Necessary for normal cell division and for the maintenance of normal septation. The protein is Probable GTP-binding protein EngB of Bacillus anthracis (strain A0248).